Reading from the N-terminus, the 215-residue chain is Pyrrolidone-carboxylate peptidase (215 aa).

Residues glutamate 80, cysteine 143, and histidine 167 contribute to the active site.

The protein belongs to the peptidase C15 family. In terms of assembly, homotetramer.

The protein localises to the cytoplasm. The catalysed reaction is Release of an N-terminal pyroglutamyl group from a polypeptide, the second amino acid generally not being Pro.. Removes 5-oxoproline from various penultimate amino acid residues except L-proline. The polypeptide is Pyrrolidone-carboxylate peptidase (Pectobacterium atrosepticum (strain SCRI 1043 / ATCC BAA-672) (Erwinia carotovora subsp. atroseptica)).